Reading from the N-terminus, the 1643-residue chain is MSLFTALNSTPHDALLEAEEHSRELQVEESFRVFQSALFHLKAKRFDDAEAKFEQLFNIEVLKPDHWGLYRYSSPTLDLLRYLAYRNRGVFYYQYVREHAEELDKDDIVDYILKVVENLLQALQHSDGDAAVTGLLLQVFRGFKSKRLQRWILEYELTKQPEEMLLLGRGRALLPDTRGLVEEYRRVLRDVRSEPVTEFAARVLTLVKTDSLEVQPLPPVLDKIEQLKDEDDAMMKQLAEYEVNLEELSWECIAESFRSLVPKYKYTNFFSKAPDPYSEAGDPIECIKFVHNDKPIEQEVMEQLSVQNEREPFAATQAATEAPTLEKEGSENGGRTESKRDSELPSDSQRPAQRSSKRFKERSTETNEAELLRPHQDFAALFYSCTGILEVRLEIELSHLNPEAIPSTYPAYMPMLDFYECLNSWTSKHTEFLNQSETKGTSKNKGKGEDSFQLTSLLRSSMFTEENRPTISLTELPYKEVAEFISTVNSNRLHFHAVRLLLLQVLLTVRPDGSCLITDTFWSPILYDTIESFVLSLESNIYDLVYSQSEKYKGLGLSFCEVLMNSLGGIYTEIHAKKISGGKYGELEAQKNKLEKKIDRWVLLLDQLVFEGKLKFRYLWSKFCYLQCISDVTDDRIIHSLDYITHELRNSSMDIDISYANYEHTPRLNMETVQSQLSKIKMMRKFTMVNQMDVDRNDSSNEDQIEALSRVLVGTSLLDTPEDRSMSEFVNQAPFLLKIKLWRIVLHHYLAVKDQSNFQICYFKVLHVLYERLCSKEYSDQSQLQRQQTLLSTLSLMRSFTSLFIELLSGANEWVINDTSQASEYFKLLIDVFILLYPLTYFETLSQKSATTVSFFKKAAKSSVILKDMFVDISCLLVLYFTGACTQKEVVNGVEVATEFIHALHLLIGGFTFCDAANGNFLNLAEHFFCSVEGSSSFIPLKQILLCKYRLSLGGDANSFEDHGAKPQVLEMHNAVRLAKYLIRFEYQNKNPYLISTNRSNLKQVIENVIDVIGKIPYAENHILARNVYYFEQYLEAPVTAKIIQEALQGCISIELTKPRDNLQEIVDLGLYYISGVQLLNLYKVRKKTLQARPSELDSIIETLKADILYKTNRFETWFLLGKCYSYVVEDDLIWTSDRLVVASKKATTASIQRKAILCYLMALNLCQLSVDDPSLSEAQKMENAFIKREIYEVLALELLNAYFKPMEGLPFQRDIAPALVLTETGELVEPKNSPQPSISSANIYRATLLVFTNADEMYKDSQDALQNWLNPHYIANLRFKHEREDFITDGFDIIIRACNLAMKASTSNDNIIEPHYSLVIKCYKSVKHGWLRPEDALKHLLNDNSFLAQEANFYSHNPENSVQDFYRKIITLLRRLLALDKRKWHHRPTYRIARILFDDFNDVDGAIQEMGVLMALKSVNKNLVNIWKPEYERPGKHFVYTYQYVMFYLKLLSHKNDYISLGHAARKMRRFGSGMVNGSLATDKAVEMFINGARAALGINEKEHAELLLPTLNYQAFNRYSDELIASFNKENYSYEVLESLAISYQLKKGSSGIAFDGVCLSIYFKYLYLPWVEEHEAAEATQSMVKFVEINKNVNPTENETASPQPAAEPQKSTTKQVSSRKRVSKKDAFDKISQIVDKIT.

Disordered stretches follow at residues 311–370 and 1598–1629; these read EPFA…NEAE and PTEN…VSKK. Residues 324–343 are compositionally biased toward basic and acidic residues; sequence TLEKEGSENGGRTESKRDSE. Over residues 345–354 the composition is skewed to polar residues; sequence PSDSQRPAQR. Basic and acidic residues predominate over residues 361–370; it reads ERSTETNEAE.

Belongs to the HIR3 family.

The protein localises to the nucleus. Its function is as follows. Has a role in a nucleosome assembly pathway that is required for the integrity of heterochromatin and proper chromosome segregation. This Eremothecium gossypii (strain ATCC 10895 / CBS 109.51 / FGSC 9923 / NRRL Y-1056) (Yeast) protein is Histone transcription regulator 3 homolog (HIR3).